The sequence spans 835 residues: MLKKISLFDNLEQWVDLSLLMIRTSFLDANYFGVAKLSLFKYGNYLIDNLNQAQWKTLSQVLQLNKQPYSGFLLVNNHQYLPLQKIKFNLCEEIDLRNKNKWLFPNSFSIFLKQDLSYKKDQNYFNLVNIPKQLKWFLGFNALNDLFRFSILKIENVNQKTSKVINQFFTSKFINSIYFEQVDFEYNNFLTLIEKNERELVDFNCMFFNQLFTFNNKVIKSFFERYYALNEQKNNLKNKLKIAAYEAKSRDNSYFEKLQIERAKQRLFDAKKTFSKQHKNALQLINSFTFSLIFSGWKIKWRSFFNFYRKRILEKKIVSKRIKTRILLLKEIKKMDLLSPKLLVETIDESINLVNKIFANIQNLYQEIISLKSGPNLNWKYQTINQELKIMSARFILTKKEVHEFLIKARLSFIKNFVKQSNNLYVHEKLVNELKENILLNQNHYRGKHNNSFSVLIQKTVFKQFIDTVQYAIGLISMRKSLETFNFAFQIKQYFYESLLANYQKINWQKYELNNLYFVLISLWNSLSKKFQQFFNKYEFLSCGSNDFIWNEGRSEPHFSLLKDKLKNDLNSPKWNFLVDKVINKYLDLNFETPVSFLLASRGFSSTTDTTNKETKNDLKQKLKKCKQKYKLLLKDINLVKWIFRDETNQKLQKIKFIMKRYCILNKTLHLRLKKTNKKIKRTFFIDSEECNINRLEASNKLYLNVLNSQLKTINFFLRSQKNLKKLNFINNINLLINQTKKNGISSWMLFSDLNKINKNESLKLYLLFKLLLNPKLLMINCCNDFTNHAYNFIRGLLISYQNKQGIALIFNDPNNKLVKNFSIKNIDFETGMKK.

This is an uncharacterized protein from Mycoplasma genitalium (strain ATCC 33530 / DSM 19775 / NCTC 10195 / G37) (Mycoplasmoides genitalium).